Reading from the N-terminus, the 76-residue chain is MDVPRNENSSDFPIRCFSCGAVIGHLYDEYKQKLSEGKSPKEALDELGIERYCCRRMFITHKSVIKELSRFHGAVG.

The Zn(2+) site is built by C16, C19, C53, and C54.

The protein belongs to the archaeal Rpo10/eukaryotic RPB10 RNA polymerase subunit family. Part of the RNA polymerase complex. It depends on Zn(2+) as a cofactor.

Its subcellular location is the cytoplasm. The catalysed reaction is RNA(n) + a ribonucleoside 5'-triphosphate = RNA(n+1) + diphosphate. In terms of biological role, DNA-dependent RNA polymerase (RNAP) catalyzes the transcription of DNA into RNA using the four ribonucleoside triphosphates as substrates. This chain is DNA-directed RNA polymerase subunit Rpo10, found in Archaeoglobus fulgidus (strain ATCC 49558 / DSM 4304 / JCM 9628 / NBRC 100126 / VC-16).